Here is a 984-residue protein sequence, read N- to C-terminus: Putative formate dehydrogenase SAB2186c (984 aa).

The 2Fe-2S ferredoxin-type domain maps to 3-79; sequence EHLVVTLDGK…PMTVNTVNND (77 aa). Residues C37, C48, C51, and C63 each coordinate [2Fe-2S] cluster. The 4Fe-4S His(Cys)3-ligated-type domain occupies 79-119; sequence DVKDAQKEALDRILEKHMLYCTVCDYNNGDCEIHNTMDAWG. Residues H95, C99, C102, C109, C147, C150, C153, C157, C190, C193, C196, C200, C264, C267, C271, and C299 each contribute to the [4Fe-4S] cluster site. 2 consecutive 4Fe-4S ferredoxin-type domains span residues 138–165 and 181–211; these read PFYR…VNET and NDVP…VNME. Positions 252–984 are formate dehydrogenase; the sequence is MRKERIKKTK…YVFPGNQVDK (733 aa). A 4Fe-4S Mo/W bis-MGD-type domain is found at 257–313; sequence IKKTKTVCTYCGVGCSFEVWTKDREILKVQPSHDSPANKIATCVKGKFSWGHINSDQ.

The protein in the C-terminal section; belongs to the prokaryotic molybdopterin-containing oxidoreductase family. [2Fe-2S] cluster is required as a cofactor. It depends on [4Fe-4S] cluster as a cofactor. Requires Mo-bis(molybdopterin guanine dinucleotide) as cofactor.

It carries out the reaction formate + NAD(+) = CO2 + NADH. The polypeptide is Putative formate dehydrogenase SAB2186c (Staphylococcus aureus (strain bovine RF122 / ET3-1)).